We begin with the raw amino-acid sequence, 237 residues long: Ubiquinone biosynthesis O-methyltransferase (237 aa).

Residues arginine 38, glycine 58, aspartate 79, and methionine 124 each contribute to the S-adenosyl-L-methionine site.

The protein belongs to the methyltransferase superfamily. UbiG/COQ3 family.

It catalyses the reaction a 3-demethylubiquinol + S-adenosyl-L-methionine = a ubiquinol + S-adenosyl-L-homocysteine + H(+). The catalysed reaction is a 3-(all-trans-polyprenyl)benzene-1,2-diol + S-adenosyl-L-methionine = a 2-methoxy-6-(all-trans-polyprenyl)phenol + S-adenosyl-L-homocysteine + H(+). The protein operates within cofactor biosynthesis; ubiquinone biosynthesis. Functionally, O-methyltransferase that catalyzes the 2 O-methylation steps in the ubiquinone biosynthetic pathway. In Acinetobacter baumannii (strain AB307-0294), this protein is Ubiquinone biosynthesis O-methyltransferase.